The sequence spans 131 residues: Urease subunit beta (131 aa).

The segment at 100–131 is disordered; sequence PLDPAAGVTSDEDAASAVVPRGAETSEREARA.

The protein belongs to the urease beta subunit family. In terms of assembly, heterotrimer of UreA (gamma), UreB (beta) and UreC (alpha) subunits. Three heterotrimers associate to form the active enzyme.

It is found in the cytoplasm. It catalyses the reaction urea + 2 H2O + H(+) = hydrogencarbonate + 2 NH4(+). Its pathway is nitrogen metabolism; urea degradation; CO(2) and NH(3) from urea (urease route): step 1/1. The polypeptide is Urease subunit beta (Kocuria rhizophila (strain ATCC 9341 / DSM 348 / NBRC 103217 / DC2201)).